The following is a 255-amino-acid chain: Syntaxin-6 (255 aa).

S2 bears the N-acetylserine mark. S2 carries the phosphoserine modification. Residues 2 to 112 (SMEDPFFVVK…KDQMSASSVQ (111 aa)) are interaction with BLTP3B. A required for interaction with VPS51 region spans residues 2-168 (SMEDPFFVVK…QAQQQLIVEQ (167 aa)). Residues 2 to 234 (SMEDPFFVVK…VSHMTSDRRQ (233 aa)) lie on the Cytoplasmic side of the membrane. A coiled-coil region spans residues 41-74 (EEIDWTTNELRNNLRSIEWDLEDLDETISIVEAN). Phosphoserine occurs at positions 129 and 152. One can recognise a t-SNARE coiled-coil homology domain in the interval 163–225 (QLIVEQQDEQ…DNVMKKLAKV (63 aa)). A helical; Anchor for type IV membrane protein membrane pass occupies residues 235–255 (WCAIAILFAVLLVVLTLFLVL).

It belongs to the syntaxin family. As to quaternary structure, identified in a complex containing STX6, STX12, VAMP4 and VTI1A. Binds EEA1. Interacts with VPS45A and GOPC. Interacts with MARCHF2; the interaction promotes MARCHF2-mediated ubiquitination and degradation of CFTR. Interacts with MARCHF3. Interacts with BLTP3B (via C-terminal coiled-coil domain). Interacts with BAIAP3; this interaction is increased in the presence of calcium. Interacts (via N-terminus) with VPS51. Interacts with VPS13B. Widely expressed, with relatively higher expression in brain, lung and kidney.

It is found in the golgi apparatus membrane. The protein localises to the golgi apparatus. Its subcellular location is the trans-Golgi network membrane. It localises to the recycling endosome membrane. Its function is as follows. SNARE promoting movement of transport vesicles to target membranes. Targets endosomes to the trans-Golgi network, and may therefore function in retrograde trafficking. Together with SNARE STX12, promotes movement of vesicles from endosomes to the cell membrane, and may therefore function in the endocytic recycling pathway. This chain is Syntaxin-6 (Stx6), found in Rattus norvegicus (Rat).